The following is a 414-amino-acid chain: Serine/threonine transporter SstT (414 aa).

The next 8 helical transmembrane spans lie at 22–42 (GLVLGIVVALISAPLQETIGF), 54–74 (IFVKALRAVAPILIFFLVMAA), 89–109 (IIVLYLLGTFLAAFVAVIAGF), 148–168 (AIFKANFIGVLAWSIGLGLAL), 189–209 (IVHVIISFAPFGVFGLVAETL), 223–243 (LLAVLIGTMLFTAFVVNPILV), 305–325 (MAGAAITITILTLAAVHTLGL), and 337–357 (IVAALCACGASGVAGGSLLLI).

It belongs to the dicarboxylate/amino acid:cation symporter (DAACS) (TC 2.A.23) family.

The protein resides in the cell inner membrane. The enzyme catalyses L-serine(in) + Na(+)(in) = L-serine(out) + Na(+)(out). The catalysed reaction is L-threonine(in) + Na(+)(in) = L-threonine(out) + Na(+)(out). Functionally, involved in the import of serine and threonine into the cell, with the concomitant import of sodium (symport system). In Haemophilus influenzae (strain PittGG), this protein is Serine/threonine transporter SstT.